We begin with the raw amino-acid sequence, 445 residues long: Trigger factor (445 aa).

Residues 162–247 (GDQVTIDAIG…IKAVHTAEPT (86 aa)) enclose the PPIase FKBP-type domain.

The protein belongs to the FKBP-type PPIase family. Tig subfamily.

It is found in the cytoplasm. It carries out the reaction [protein]-peptidylproline (omega=180) = [protein]-peptidylproline (omega=0). Its function is as follows. Involved in protein export. Acts as a chaperone by maintaining the newly synthesized protein in an open conformation. Functions as a peptidyl-prolyl cis-trans isomerase. This Rickettsia conorii (strain ATCC VR-613 / Malish 7) protein is Trigger factor.